Reading from the N-terminus, the 304-residue chain is Polyisoprenyl-teichoic acid--peptidoglycan teichoic acid transferase TagU (304 aa).

Residues M1–K3 are Cytoplasmic-facing. A helical; Signal-anchor for type II membrane protein membrane pass occupies residues A4–I24. Residues Y25–S304 are Extracellular-facing.

This sequence belongs to the LytR/CpsA/Psr (LCP) family.

The protein localises to the cell membrane. It participates in cell wall biogenesis. Functionally, may catalyze the final step in cell wall teichoic acid biosynthesis, the transfer of the anionic cell wall polymers (APs) from their lipid-linked precursor to the cell wall peptidoglycan (PG). The sequence is that of Polyisoprenyl-teichoic acid--peptidoglycan teichoic acid transferase TagU from Halalkalibacterium halodurans (strain ATCC BAA-125 / DSM 18197 / FERM 7344 / JCM 9153 / C-125) (Bacillus halodurans).